The chain runs to 159 residues: 2-C-methyl-D-erythritol 2,4-cyclodiphosphate synthase (159 aa).

Residues aspartate 10 and histidine 12 each coordinate a divalent metal cation. 4-CDP-2-C-methyl-D-erythritol 2-phosphate contacts are provided by residues aspartate 10–histidine 12 and histidine 37–serine 38. Histidine 45 serves as a coordination point for a divalent metal cation. 4-CDP-2-C-methyl-D-erythritol 2-phosphate-binding positions include aspartate 59–glycine 61, phenylalanine 64–aspartate 68, alanine 103–leucine 109, threonine 135–glutamate 138, phenylalanine 142, and arginine 145.

It belongs to the IspF family. In terms of assembly, homotrimer. It depends on a divalent metal cation as a cofactor.

It catalyses the reaction 4-CDP-2-C-methyl-D-erythritol 2-phosphate = 2-C-methyl-D-erythritol 2,4-cyclic diphosphate + CMP. It participates in isoprenoid biosynthesis; isopentenyl diphosphate biosynthesis via DXP pathway; isopentenyl diphosphate from 1-deoxy-D-xylulose 5-phosphate: step 4/6. Its function is as follows. Involved in the biosynthesis of isopentenyl diphosphate (IPP) and dimethylallyl diphosphate (DMAPP), two major building blocks of isoprenoid compounds. Catalyzes the conversion of 4-diphosphocytidyl-2-C-methyl-D-erythritol 2-phosphate (CDP-ME2P) to 2-C-methyl-D-erythritol 2,4-cyclodiphosphate (ME-CPP) with a corresponding release of cytidine 5-monophosphate (CMP). This Francisella philomiragia subsp. philomiragia (strain ATCC 25017 / CCUG 19701 / FSC 153 / O#319-036) protein is 2-C-methyl-D-erythritol 2,4-cyclodiphosphate synthase.